A 142-amino-acid polypeptide reads, in one-letter code: Large ribosomal subunit protein uL13 (142 aa).

This sequence belongs to the universal ribosomal protein uL13 family. As to quaternary structure, part of the 50S ribosomal subunit.

This protein is one of the early assembly proteins of the 50S ribosomal subunit, although it is not seen to bind rRNA by itself. It is important during the early stages of 50S assembly. The chain is Large ribosomal subunit protein uL13 from Vibrio campbellii (strain ATCC BAA-1116).